The primary structure comprises 520 residues: Cytochrome P450 734A1 (520 aa).

Residues 13-33 (VLVLSVILSLVIVKGMSLLWW) traverse the membrane as a helical segment. Heme is bound at residue Cys463.

This sequence belongs to the cytochrome P450 family. It depends on heme as a cofactor.

The protein localises to the membrane. Its function is as follows. Cytochrome P450 involved in brassinosteroids (BRs) inactivation and regulation of BRs homeostasis. Inactivates the BRs castasterone (CS) and brassinolide (BL) through carbon 26 hydroxylation. Acts in association with CYP72C1 to inactivate BRs and modulate photomorphogenesis. The protein is Cytochrome P450 734A1 (CYP734A1) of Arabidopsis thaliana (Mouse-ear cress).